Consider the following 107-residue polypeptide: YcgL domain-containing protein Psyc_0800 (107 aa).

One can recognise a YcgL domain in the interval 1–95 (MHCDIYKFLK…QDVMRRQAEL (95 aa)).

The polypeptide is YcgL domain-containing protein Psyc_0800 (Psychrobacter arcticus (strain DSM 17307 / VKM B-2377 / 273-4)).